A 676-amino-acid polypeptide reads, in one-letter code: Beta-galactosidase BgaP (676 aa).

Residue arginine 112 participates in substrate binding. A Zn(2+)-binding site is contributed by cysteine 116. Asparagine 150 is a binding site for substrate. Residue glutamate 151 is the Proton donor of the active site. Positions 156, 158, and 161 each coordinate Zn(2+). Residue glutamate 308 is the Nucleophile of the active site. Substrate is bound by residues tryptophan 316 and 356–359 (EKYH).

It belongs to the glycosyl hydrolase 42 family. As to quaternary structure, homodimer.

The enzyme catalyses Hydrolysis of terminal non-reducing beta-D-galactose residues in beta-D-galactosides.. Its activity is regulated as follows. No activity lost during treatment with 100 mM EDTA after 2 hours, and the addition of 1 mM MgCl(2), 1 mM CaCl(2) or 1 mM MnCl(2) has no effect. However, the enzyme activity is inhibited by Zn(2+), Cu(2+), Ni(2+) and Co(2+) to different extents. Addition of Na(+) or K(+) slightly stimulates the enzyme activity at low concentrations and the optimal concentration is 250 mM. A further increase of their concentration of ions above the optimum value results in a decrease in enzyme activity. The enzyme is still active even in the presence of Na(+) or K(+) at a concentration up to 5 M. In terms of biological role, hydrolyzes lactose, o-nitrophenyl-beta-D-galactopyranoside (ONPG), p-nitrophenyl-beta-D-galactopyranoside (PNPG), 5-bromo-4-chloro-3-indolyl-beta-D-galactopyranoside (X-gal), o-nitrophenyl-beta-D-fucopyranoside, p-nitrophenyl-beta-D-mannoside, o-nitrophenyl-beta-D-glucoside, p-nitrophenyl-beta-D-xyloside, p-nitrophenyl-beta-D-cellobioside, p-nitrophenyl-beta-D-arabinoside, p-nitrophenyl-beta-D-lactoside, p-nitrophenyl-beta-D-galacturonide, p-nitrophenyl-beta-D-glucuronide and p-nitrophenyl-alpha-D-galactoside with highest level of activity with ONPG as substrate, intermediate level of activity with PNPG and lower levels of activity with all other chromogenic nitrophenyl analogs. Able to hydrolyze 34% of milk lactose after 60 minutes at 5 degrees Celsius. The chain is Beta-galactosidase BgaP from Planococcus sp. (strain L4).